Consider the following 64-residue polypeptide: Large ribosomal subunit protein bL33 (64 aa).

The protein belongs to the bacterial ribosomal protein bL33 family.

The protein is Large ribosomal subunit protein bL33 of Nostoc punctiforme (strain ATCC 29133 / PCC 73102).